The primary structure comprises 358 residues: U5 small nuclear ribonucleoprotein 40 kDa protein (358 aa).

Residue Lys-18 forms a Glycyl lysine isopeptide (Lys-Gly) (interchain with G-Cter in SUMO2) linkage. An Asymmetric dimethylarginine modification is found at Arg-21. WD repeat units follow at residues Gly-65 to Ala-104, Gly-108 to Arg-147, Gly-150 to Thr-190, Gln-192 to Thr-231, Gly-234 to Arg-273, Asn-284 to Lys-323, and Gly-326 to Gln-358. A Glycyl lysine isopeptide (Lys-Gly) (interchain with G-Cter in SUMO2) cross-link involves residue Lys-271.

Component of the pre-catalytic and catalytic spliceosome complexes. Component of the postcatalytic spliceosome P complex. Part of the U5 snRNP complex. Interacts with PRPF8. Component of the U4/U6-U5 tri-snRNP complex composed of the U4, U6 and U5 snRNAs and at least PRPF3, PRPF4, PRPF6, PRPF8, PRPF31, SNRNP200, TXNL4A, WDR57, SNRNP40, DDX23, CD2BP2, PPIH, SNU13, EFTUD2, SART1 and USP39. Component of the minor spliceosome, which splices U12-type introns.

The protein localises to the nucleus. Functionally, required for pre-mRNA splicing as component of the activated spliceosome. Component of the U5 small nuclear ribonucleoprotein (snRNP) complex and the U4/U6-U5 tri-snRNP complex, building blocks of the spliceosome. As a component of the minor spliceosome, involved in the splicing of U12-type introns in pre-mRNAs. The protein is U5 small nuclear ribonucleoprotein 40 kDa protein (SNRNP40) of Bos taurus (Bovine).